A 180-amino-acid chain; its full sequence is Thiol:disulfide interchange protein TxlA homolog (180 aa).

The helical transmembrane segment at 10-26 (LLAVVAIALSAAVYLGF) threads the bilayer. The Thioredoxin domain occupies 34–143 (SLEAQAQRAI…LEQNITALVA (110 aa)). An intrachain disulfide couples Cys-64 to Cys-67.

It belongs to the thioredoxin family.

It localises to the cell membrane. Its function is as follows. Required for disulfide bond formation in some proteins. Acts by transferring its disulfide bond to other proteins and is reduced in the process. The sequence is that of Thiol:disulfide interchange protein TxlA homolog (txlA) from Synechocystis sp. (strain ATCC 27184 / PCC 6803 / Kazusa).